We begin with the raw amino-acid sequence, 56 residues long: Protein hunchback (56 aa).

C2H2-type zinc fingers lie at residues 1-5 (HLRNH), 11-33 (FRCD…LKSH), and 39-56 (YRCA…SLKL).

Belongs to the hunchback C2H2-type zinc-finger protein family.

The protein resides in the nucleus. In terms of biological role, gap class segmentation protein that controls development of head structures. This chain is Protein hunchback (hb), found in Locusta migratoria (Migratory locust).